A 431-amino-acid chain; its full sequence is Trigger factor (431 aa).

Residues 161–245 form the PPIase FKBP-type domain; the sequence is TDIVIGDVQK…VKEIKRMELP (85 aa).

This sequence belongs to the FKBP-type PPIase family. Tig subfamily.

It localises to the cytoplasm. The enzyme catalyses [protein]-peptidylproline (omega=180) = [protein]-peptidylproline (omega=0). Its function is as follows. Involved in protein export. Acts as a chaperone by maintaining the newly synthesized protein in an open conformation. Functions as a peptidyl-prolyl cis-trans isomerase. In Chloroherpeton thalassium (strain ATCC 35110 / GB-78), this protein is Trigger factor.